Here is a 315-residue protein sequence, read N- to C-terminus: Aspartate carbamoyltransferase catalytic subunit (315 aa).

2 residues coordinate carbamoyl phosphate: Arg54 and Thr55. Residue Lys82 coordinates L-aspartate. 3 residues coordinate carbamoyl phosphate: Arg104, His134, and Gln137. L-aspartate is bound by residues Arg174 and Arg229. Carbamoyl phosphate contacts are provided by Gly270 and Pro271.

Belongs to the aspartate/ornithine carbamoyltransferase superfamily. ATCase family. As to quaternary structure, heterododecamer (2C3:3R2) of six catalytic PyrB chains organized as two trimers (C3), and six regulatory PyrI chains organized as three dimers (R2).

It catalyses the reaction carbamoyl phosphate + L-aspartate = N-carbamoyl-L-aspartate + phosphate + H(+). The protein operates within pyrimidine metabolism; UMP biosynthesis via de novo pathway; (S)-dihydroorotate from bicarbonate: step 2/3. In terms of biological role, catalyzes the condensation of carbamoyl phosphate and aspartate to form carbamoyl aspartate and inorganic phosphate, the committed step in the de novo pyrimidine nucleotide biosynthesis pathway. This Leifsonia xyli subsp. xyli (strain CTCB07) protein is Aspartate carbamoyltransferase catalytic subunit.